Consider the following 199-residue polypeptide: Regulator of G-protein signaling 16 (199 aa).

Residues cysteine 2 and cysteine 12 are each lipidated (S-palmitoyl cysteine). The 117-residue stretch at 64 to 180 (SFQSLLNSKN…LKSPAYRDLA (117 aa)) folds into the RGS domain. Phosphotyrosine occurs at positions 167 and 176.

In terms of assembly, interacts with GNAI1 and GNAQ. Interacts with GNAI3, GNAI3 and GNAO1. In terms of processing, palmitoylated on Cys-2 and/or Cys-12. Post-translationally, phosphorylated. Phosphorylation at Tyr-167 by EGFR enhances GTPase accelerating (GAP) activity toward GNAI1. As to expression, predominantly found in the retina. Some expression has been found in the liver.

It localises to the membrane. Functionally, regulates G protein-coupled receptor signaling cascades. Inhibits signal transduction by increasing the GTPase activity of G protein alpha subunits, thereby driving them into their inactive GDP-bound form. Plays an important role in the phototransduction cascade by regulating the lifetime and effective concentration of activated transducin alpha. May regulate extra and intracellular mitogenic signals. The polypeptide is Regulator of G-protein signaling 16 (Rgs16) (Rattus norvegicus (Rat)).